The chain runs to 427 residues: Glucose-6-phosphate isomerase (427 aa).

Glutamate 277 acts as the Proton donor in catalysis. Active-site residues include histidine 298 and lysine 414.

It belongs to the GPI family.

The protein resides in the cytoplasm. The enzyme catalyses alpha-D-glucose 6-phosphate = beta-D-fructose 6-phosphate. It functions in the pathway carbohydrate biosynthesis; gluconeogenesis. The protein operates within carbohydrate degradation; glycolysis; D-glyceraldehyde 3-phosphate and glycerone phosphate from D-glucose: step 2/4. Its function is as follows. Catalyzes the reversible isomerization of glucose-6-phosphate to fructose-6-phosphate. The protein is Glucose-6-phosphate isomerase of Mycoplasma mycoides subsp. mycoides SC (strain CCUG 32753 / NCTC 10114 / PG1).